A 130-amino-acid chain; its full sequence is Cytochrome b-c1 complex subunit 7 (130 aa).

Belongs to the UQCRB/QCR7 family. As to quaternary structure, component of the ubiquinol-cytochrome c oxidoreductase (cytochrome b-c1 complex, complex III, CIII), a multisubunit enzyme composed of 3 respiratory subunits cytochrome b, cytochrome c1 and Rieske protein, 2 core protein subunits, and additional low-molecular weight protein subunits. The complex exists as an obligatory dimer and forms supercomplexes (SCs) in the inner mitochondrial membrane with cytochrome c oxidase (complex IV, CIV).

Its subcellular location is the mitochondrion inner membrane. Functionally, component of the ubiquinol-cytochrome c oxidoreductase, a multisubunit transmembrane complex that is part of the mitochondrial electron transport chain which drives oxidative phosphorylation. The respiratory chain contains 3 multisubunit complexes succinate dehydrogenase (complex II, CII), ubiquinol-cytochrome c oxidoreductase (cytochrome b-c1 complex, complex III, CIII) and cytochrome c oxidase (complex IV, CIV), that cooperate to transfer electrons derived from NADH and succinate to molecular oxygen, creating an electrochemical gradient over the inner membrane that drives transmembrane transport and the ATP synthase. The cytochrome b-c1 complex catalyzes electron transfer from ubiquinol to cytochrome c, linking this redox reaction to translocation of protons across the mitochondrial inner membrane, with protons being carried across the membrane as hydrogens on the quinol. In the process called Q cycle, 2 protons are consumed from the matrix, 4 protons are released into the intermembrane space and 2 electrons are passed to cytochrome c. In Echinococcus multilocularis (Fox tapeworm), this protein is Cytochrome b-c1 complex subunit 7 (UBCRBP).